The following is a 639-amino-acid chain: Putative cyclic beta-1,2-glucan modification protein (639 aa).

A run of 6 helical transmembrane segments spans residues 34 to 54 (ALFT…IVRW), 69 to 89 (PAWT…ALFG), 96 to 116 (LLIA…QVFL), 144 to 164 (WTAV…ALLL), 185 to 205 (FALP…FSWI), and 227 to 247 (FALA…AGYM).

The protein localises to the cell membrane. In Rhizobium meliloti (strain 1021) (Ensifer meliloti), this protein is Putative cyclic beta-1,2-glucan modification protein (cgmA).